The primary structure comprises 212 residues: External core antigen (212 aa).

Residues 1–19 (MQLFHLCLIISCSCPTVQA) form the signal peptide. The HBEAG stretch occupies residues 25 to 27 (GWL). Residues 165-212 (NAPILSTLPETTVVRRRGRSPRRRTPSPRRRRSQSPRRRRSQSRESQC) form a disordered region. Over residues 178–205 (VRRRGRSPRRRTPSPRRRRSQSPRRRRS) the composition is skewed to basic residues. A 1; half-length repeat occupies 184-190 (SPRRRTP). Positions 184–206 (SPRRRTPSPRRRRSQSPRRRRSQ) are 3 X 8 AA repeats of S-P-R-R-R-R-S-Q. Residues 184-212 (SPRRRTPSPRRRRSQSPRRRRSQSRESQC) constitute a propeptide that is removed on maturation. Tandem repeats lie at residues 191-198 (SPRRRRSQ) and 199-206 (SPRRRRSQ).

The protein belongs to the orthohepadnavirus precore antigen family. As to quaternary structure, homodimerizes. Phosphorylated. In terms of processing, cleaved by host furin.

It is found in the secreted. The protein resides in the host nucleus. Its function is as follows. May regulate immune response to the intracellular capsid in acting as a T-cell tolerogen, by having an immunoregulatory effect which prevents destruction of infected cells by cytotoxic T-cells. This immune regulation may predispose to chronicity during perinatal infections and prevent severe liver injury during adult infections. The polypeptide is External core antigen (Hepatitis B virus genotype C subtype ayw (isolate China/Tibet127/2002) (HBV-C)).